An 831-amino-acid polypeptide reads, in one-letter code: uncharacterized protein (831 aa).

Positions 1–146 (MDIFDSTITS…RAFSILSGVA (146 aa)) constitute a CID domain. Disordered regions lie at residues 205–233 (SSSSSSSSSSSSSSTTTTTTTTSELSSIS), 265–354 (KEHF…NYNN), 434–480 (IGNS…NEDS), and 572–831 (CGAD…SNRH). Low complexity-rich tracts occupy residues 272–354 (NDTS…NYNN) and 434–477 (IGNS…NNNN). Basic and acidic residues-rich tracts occupy residues 592 to 601 (NENKQNDSHR) and 611 to 813 (SRGE…RSKE). Residues 817–831 (NNDNRSSSNRSSNRH) are compositionally biased toward low complexity.

This is an uncharacterized protein from Dictyostelium discoideum (Social amoeba).